Consider the following 223-residue polypeptide: Cytochrome c biogenesis ATP-binding export protein CcmA (223 aa).

The region spanning M1–Y223 is the ABC transporter domain. Position 31 to 38 (G31 to T38) interacts with ATP.

Belongs to the ABC transporter superfamily. CcmA exporter (TC 3.A.1.107) family. In terms of assembly, the complex is composed of two ATP-binding proteins (CcmA) and two transmembrane proteins (CcmB).

The protein resides in the cell inner membrane. It catalyses the reaction heme b(in) + ATP + H2O = heme b(out) + ADP + phosphate + H(+). Its function is as follows. Part of the ABC transporter complex CcmAB involved in the biogenesis of c-type cytochromes; once thought to export heme, this seems not to be the case, but its exact role is uncertain. Responsible for energy coupling to the transport system. This is Cytochrome c biogenesis ATP-binding export protein CcmA from Saccharophagus degradans (strain 2-40 / ATCC 43961 / DSM 17024).